Consider the following 349-residue polypeptide: Probable protease SohB (349 aa).

Topologically, residues 1-8 (MELLSEYG) are periplasmic. Residues 9–29 (LFLAKIVTVVLAIAAIAAIIV) form a helical membrane-spanning segment. The Cytoplasmic portion of the chain corresponds to 30–349 (NVAQRNKRQR…WWQRGQKPLM (320 aa)). The Nucleophile role is filled by Ser178. Residue Lys230 is the Proton donor/acceptor of the active site.

It belongs to the peptidase S49 family.

Its subcellular location is the cell inner membrane. In terms of biological role, multicopy suppressor of the HtrA (DegP) null phenotype. It is possibly a protease, not essential for bacterial viability. The polypeptide is Probable protease SohB (sohB) (Escherichia coli (strain K12)).